A 536-amino-acid polypeptide reads, in one-letter code: Pre-mRNA-splicing regulator female-lethal(2)D (536 aa).

Positions 1-91 (MSVAAMTMDD…LQQQQQQQQQ (91 aa)) are disordered. Positions 28 to 39 (QNLNILNSSQNS) are enriched in low complexity. Basic residues predominate over residues 57–69 (HHHHHPHPHHHHH). The segment covering 72 to 91 (QQQQQQQQQHLQQQQQQQQQ) has biased composition (low complexity). Residues 254–319 (KSFSEEVKKS…KQAIKDEVVA (66 aa)) adopt a coiled-coil conformation. The tract at residues 424–450 (APRTLPPKKSKLRGITTRRNSQLEEDH) is disordered.

It belongs to the fl(2)d family. As to quaternary structure, component of the WMM complex, a N6-methyltransferase complex composed of a catalytic subcomplex, named MAC, and of an associated subcomplex, named MACOM. The MAC subcomplex is composed of Ime4/Mettl3 and Mettl14. The MACOM subcomplex is composed of fl(2)d, Flacc/Xio, Hakai, vir, and, in some cases of nito. Interacts with vir and msk. Part of a complex containing fl(2)d, Sxl and vir.

It is found in the nucleus. Associated component of the WMM complex, a complex that mediates N6-methyladenosine (m6A) methylation of mRNAs, a modification that plays a role in the efficiency of mRNA splicing and is required for sex determination. Required for sex determination and dosage compensation via Sxl alternative splicing: m6A methylation acts as a key regulator of Sxl pre-mRNA and promotes female-specific alternative splicing of Sxl, which determines female physiognomy. M6A methylation is also required for neuronal functions. Required for proper inclusion of regulated exons in Ubx transcripts, leading to isoforms Ia/b and IIa/b. This chain is Pre-mRNA-splicing regulator female-lethal(2)D, found in Drosophila melanogaster (Fruit fly).